We begin with the raw amino-acid sequence, 893 residues long: UPF0182 protein CLD_0809 (893 aa).

7 helical membrane-spanning segments follow: residues 9–29 (IPLF…NFII), 49–69 (AIII…WMYY), 94–114 (LFFI…SSSY), 154–174 (VIIS…FILE), 202–222 (LAIV…IKIW), 246–266 (FYKI…LSIV), and 273–293 (VSIC…ASFL).

The protein belongs to the UPF0182 family.

The protein localises to the cell membrane. The protein is UPF0182 protein CLD_0809 of Clostridium botulinum (strain Okra / Type B1).